A 466-amino-acid chain; its full sequence is Asparagine--tRNA ligase (466 aa).

Belongs to the class-II aminoacyl-tRNA synthetase family. As to quaternary structure, homodimer.

Its subcellular location is the cytoplasm. The enzyme catalyses tRNA(Asn) + L-asparagine + ATP = L-asparaginyl-tRNA(Asn) + AMP + diphosphate + H(+). In Shewanella baltica (strain OS195), this protein is Asparagine--tRNA ligase.